The primary structure comprises 247 residues: Type III pantothenate kinase (247 aa).

7–14 lines the ATP pocket; that stretch reads AIGNSRWH. Substrate-binding positions include Tyr-91 and 95 to 98; that span reads GLDR. Residue Asp-97 is the Proton acceptor of the active site. Asp-117 provides a ligand contact to K(+). Thr-120 contributes to the ATP binding site. Thr-172 contributes to the substrate binding site.

This sequence belongs to the type III pantothenate kinase family. As to quaternary structure, homodimer. NH4(+) is required as a cofactor. K(+) serves as cofactor.

It localises to the cytoplasm. The catalysed reaction is (R)-pantothenate + ATP = (R)-4'-phosphopantothenate + ADP + H(+). The protein operates within cofactor biosynthesis; coenzyme A biosynthesis; CoA from (R)-pantothenate: step 1/5. Its function is as follows. Catalyzes the phosphorylation of pantothenate (Pan), the first step in CoA biosynthesis. The sequence is that of Type III pantothenate kinase from Synechococcus elongatus (strain ATCC 33912 / PCC 7942 / FACHB-805) (Anacystis nidulans R2).